The chain runs to 347 residues: GMP reductase (347 aa).

108–131 (ADFEKTQQILSQNPQLNFVCIDVA) provides a ligand contact to NADP(+). K(+) contacts are provided by glycine 181 and glycine 183. The active-site Thioimidate intermediate is the cysteine 186. Residue 216-239 (IISDGGCTMPGDVAKAFGGGADFV) participates in NADP(+) binding.

Belongs to the IMPDH/GMPR family. GuaC type 1 subfamily. As to quaternary structure, homotetramer.

The enzyme catalyses IMP + NH4(+) + NADP(+) = GMP + NADPH + 2 H(+). Catalyzes the irreversible NADPH-dependent deamination of GMP to IMP. It functions in the conversion of nucleobase, nucleoside and nucleotide derivatives of G to A nucleotides, and in maintaining the intracellular balance of A and G nucleotides. This Klebsiella pneumoniae subsp. pneumoniae (strain ATCC 700721 / MGH 78578) protein is GMP reductase.